Consider the following 225-residue polypeptide: Phosphoribosylformylglycinamidine synthase subunit PurQ (225 aa).

Residues 4-225 (RIGVITFPGT…LSVLDTLVTA (222 aa)) form the Glutamine amidotransferase type-1 domain. Cys87 serves as the catalytic Nucleophile. Catalysis depends on residues His196 and Glu198.

Part of the FGAM synthase complex composed of 1 PurL, 1 PurQ and 2 PurS subunits.

It localises to the cytoplasm. The enzyme catalyses N(2)-formyl-N(1)-(5-phospho-beta-D-ribosyl)glycinamide + L-glutamine + ATP + H2O = 2-formamido-N(1)-(5-O-phospho-beta-D-ribosyl)acetamidine + L-glutamate + ADP + phosphate + H(+). It catalyses the reaction L-glutamine + H2O = L-glutamate + NH4(+). Its pathway is purine metabolism; IMP biosynthesis via de novo pathway; 5-amino-1-(5-phospho-D-ribosyl)imidazole from N(2)-formyl-N(1)-(5-phospho-D-ribosyl)glycinamide: step 1/2. In terms of biological role, part of the phosphoribosylformylglycinamidine synthase complex involved in the purines biosynthetic pathway. Catalyzes the ATP-dependent conversion of formylglycinamide ribonucleotide (FGAR) and glutamine to yield formylglycinamidine ribonucleotide (FGAM) and glutamate. The FGAM synthase complex is composed of three subunits. PurQ produces an ammonia molecule by converting glutamine to glutamate. PurL transfers the ammonia molecule to FGAR to form FGAM in an ATP-dependent manner. PurS interacts with PurQ and PurL and is thought to assist in the transfer of the ammonia molecule from PurQ to PurL. This chain is Phosphoribosylformylglycinamidine synthase subunit PurQ, found in Nocardia farcinica (strain IFM 10152).